Consider the following 469-residue polypeptide: ATP synthase subunit beta (469 aa).

156–163 (GGAGVGKT) is an ATP binding site.

Belongs to the ATPase alpha/beta chains family. F-type ATPases have 2 components, CF(1) - the catalytic core - and CF(0) - the membrane proton channel. CF(1) has five subunits: alpha(3), beta(3), gamma(1), delta(1), epsilon(1). CF(0) has three main subunits: a(1), b(2) and c(9-12). The alpha and beta chains form an alternating ring which encloses part of the gamma chain. CF(1) is attached to CF(0) by a central stalk formed by the gamma and epsilon chains, while a peripheral stalk is formed by the delta and b chains.

The protein localises to the cell membrane. The enzyme catalyses ATP + H2O + 4 H(+)(in) = ADP + phosphate + 5 H(+)(out). Functionally, produces ATP from ADP in the presence of a proton gradient across the membrane. The catalytic sites are hosted primarily by the beta subunits. This is ATP synthase subunit beta from Bacillus mycoides (strain KBAB4) (Bacillus weihenstephanensis).